A 639-amino-acid chain; its full sequence is MAU2 chromatid cohesion factor homolog (639 aa).

2 TPR repeats span residues 453–486 (GGFY…ANAE) and 493–526 (SCSL…ASKI).

Belongs to the SCC4/mau-2 family. Interacts with Nipped-B to form the cohesin loading complex.

Its subcellular location is the nucleus. It localises to the nucleoplasm. In terms of biological role, required for association of the cohesin complex with chromatin during interphase. Plays a role in sister chromatid cohesion and normal progression through prometaphase. The polypeptide is MAU2 chromatid cohesion factor homolog (Drosophila ananassae (Fruit fly)).